The sequence spans 561 residues: uncharacterized protein (561 aa).

Over residues 1–11 the composition is skewed to polar residues; that stretch reads MSQVSLPSQLK. Disordered regions lie at residues 1–22 and 522–561; these read MSQV…SRCR and CSLP…IMLP. Residues 541–561 show a composition bias toward low complexity; that stretch reads QQPQQAQAEQAQQPQQQIMLP.

This sequence to Synechocystis PCC 6803 sll0335 and to M.tuberculosis Rv2567.

This is an uncharacterized protein from Mycobacterium leprae (strain TN).